We begin with the raw amino-acid sequence, 484 residues long: uncharacterized protein (484 aa).

Positions 334 to 484 (IIIRQITDND…ENEWIYEVNL (151 aa)) constitute an N-acetyltransferase domain.

This is an uncharacterized protein from Methanocaldococcus jannaschii (strain ATCC 43067 / DSM 2661 / JAL-1 / JCM 10045 / NBRC 100440) (Methanococcus jannaschii).